Reading from the N-terminus, the 333-residue chain is Flotillin-like protein FloA (333 aa).

The helical transmembrane segment at 9–29 (IVLIVGGIIFLILFFHYVPFF) threads the bilayer.

This sequence belongs to the flotillin-like FloA family. As to quaternary structure, homooligomerizes.

The protein resides in the cell membrane. Its subcellular location is the membrane raft. In terms of biological role, found in functional membrane microdomains (FMM) that may be equivalent to eukaryotic membrane rafts. FMMs are highly dynamic and increase in number as cells age. Flotillins are thought to be important factors in membrane fluidity. The chain is Flotillin-like protein FloA from Bacteroides thetaiotaomicron (strain ATCC 29148 / DSM 2079 / JCM 5827 / CCUG 10774 / NCTC 10582 / VPI-5482 / E50).